A 354-amino-acid chain; its full sequence is Tyrosine recombinase XerH (354 aa).

One can recognise a Core-binding (CB) domain in the interval Leu-48–Asp-134. The region spanning Lys-163–Gln-346 is the Tyr recombinase domain. Catalysis depends on residues Arg-205, Lys-231, His-298, Arg-301, and His-324. Residue Tyr-333 is the O-(3'-phospho-DNA)-tyrosine intermediate of the active site.

Belongs to the 'phage' integrase family. XerH subfamily.

Its subcellular location is the cytoplasm. FtsK is required for efficient recombination. Functionally, site-specific tyrosine recombinase, which acts by catalyzing the cutting and rejoining of the recombining DNA molecules. Binds to the complete atypical dif motif (difH) site and to both halves separately. The protein is Tyrosine recombinase XerH of Campylobacter jejuni subsp. jejuni serotype O:2 (strain ATCC 700819 / NCTC 11168).